The primary structure comprises 225 residues: Octanoyltransferase (225 aa).

A BPL/LPL catalytic domain is found at 43–225 (GTAPELVWLL…KTFRDVFGRG (183 aa)). Residues 82–89 (RGGQYTYH), 157–159 (AIG), and 170–172 (GVS) each bind substrate. C188 acts as the Acyl-thioester intermediate in catalysis.

The protein belongs to the LipB family.

It localises to the cytoplasm. The catalysed reaction is octanoyl-[ACP] + L-lysyl-[protein] = N(6)-octanoyl-L-lysyl-[protein] + holo-[ACP] + H(+). It participates in protein modification; protein lipoylation via endogenous pathway; protein N(6)-(lipoyl)lysine from octanoyl-[acyl-carrier-protein]: step 1/2. Functionally, catalyzes the transfer of endogenously produced octanoic acid from octanoyl-acyl-carrier-protein onto the lipoyl domains of lipoate-dependent enzymes. Lipoyl-ACP can also act as a substrate although octanoyl-ACP is likely to be the physiological substrate. In Parvibaculum lavamentivorans (strain DS-1 / DSM 13023 / NCIMB 13966), this protein is Octanoyltransferase.